The sequence spans 351 residues: Selenide, water dikinase (351 aa).

Residue cysteine 20 is part of the active site. Residues lysine 23 and 51-53 (TKD) contribute to the ATP site. Residue aspartate 54 participates in Mg(2+) binding. Residues aspartate 71, aspartate 94, and 142–144 (GHS) contribute to the ATP site. A Mg(2+)-binding site is contributed by aspartate 94. Aspartate 230 is a Mg(2+) binding site.

This sequence belongs to the selenophosphate synthase 1 family. Class I subfamily. In terms of assembly, homodimer. Requires Mg(2+) as cofactor.

The enzyme catalyses hydrogenselenide + ATP + H2O = selenophosphate + AMP + phosphate + 2 H(+). Functionally, synthesizes selenophosphate from selenide and ATP. In Pasteurella multocida (strain Pm70), this protein is Selenide, water dikinase.